The chain runs to 831 residues: Multiphosphoryl transfer protein (831 aa).

The HPr domain maps to 1–90 (MLTIQFLCPL…EYIQVRFIDS (90 aa)). Residue His15 is the Pros-phosphohistidine intermediate; for HPr activity of the active site. His15 is modified (phosphohistidine; by EI). Positions 119 to 650 (GNVLASGVGV…AVKSQLRQLD (532 aa)) are PTS EI. His298 (tele-phosphohistidine intermediate; for PTS EI activity) is an active-site residue. A Phosphohistidine; by autocatalysis modification is found at His298. Phosphoenolpyruvate-binding residues include Arg405 and Arg441. Mg(2+)-binding residues include Glu540 and Asp564. Residues 563-564 (ND) and Arg574 each bind phosphoenolpyruvate. Cys611 acts as the Proton donor; for EI activity in catalysis. Positions 685 to 828 (PLLALENIFV…QSILTLLETE (144 aa)) constitute a PTS EIIA type-2 domain. The active-site Tele-phosphohistidine intermediate; for PTS EIIA activity is His747. At His747 the chain carries Phosphohistidine; by HPr.

The protein belongs to the PEP-utilizing enzyme family. Requires Mg(2+) as cofactor.

It localises to the cytoplasm. The enzyme catalyses L-histidyl-[protein] + phosphoenolpyruvate = N(pros)-phospho-L-histidyl-[protein] + pyruvate. The catalysed reaction is D-fructose(out) + N(pros)-phospho-L-histidyl-[protein] = D-fructose 1-phosphate(in) + L-histidyl-[protein]. Its function is as follows. Multifunctional protein that includes general (non sugar-specific) and sugar-specific components of the phosphoenolpyruvate-dependent sugar phosphotransferase system (sugar PTS). This major carbohydrate active transport system catalyzes the phosphorylation of incoming sugar substrates concomitantly with their translocation across the cell membrane. The enzyme II FryABC PTS system is involved in fructose transport. This chain is Multiphosphoryl transfer protein (fryA), found in Escherichia coli O6:H1 (strain CFT073 / ATCC 700928 / UPEC).